A 360-amino-acid polypeptide reads, in one-letter code: Histidinol-phosphate aminotransferase (360 aa).

An N6-(pyridoxal phosphate)lysine modification is found at K224.

The protein belongs to the class-II pyridoxal-phosphate-dependent aminotransferase family. Histidinol-phosphate aminotransferase subfamily. The cofactor is pyridoxal 5'-phosphate.

It catalyses the reaction L-histidinol phosphate + 2-oxoglutarate = 3-(imidazol-4-yl)-2-oxopropyl phosphate + L-glutamate. The protein operates within amino-acid biosynthesis; L-histidine biosynthesis; L-histidine from 5-phospho-alpha-D-ribose 1-diphosphate: step 7/9. The protein is Histidinol-phosphate aminotransferase of Methanococcoides burtonii (strain DSM 6242 / NBRC 107633 / OCM 468 / ACE-M).